The primary structure comprises 758 residues: 5-methyltetrahydropteroyltriglutamate--homocysteine methyltransferase (758 aa).

5-methyltetrahydropteroyltri-L-glutamate-binding positions include 16–19 and K117; that span reads RELK. Residues 436–438 and E489 contribute to the L-homocysteine site; that span reads IGS. Residues 436–438 and E489 contribute to the L-methionine site; that span reads IGS. Residues 520–521 and W566 each bind 5-methyltetrahydropteroyltri-L-glutamate; that span reads RC. D604 contributes to the L-homocysteine binding site. Residue D604 coordinates L-methionine. 5-methyltetrahydropteroyltri-L-glutamate is bound at residue E610. Zn(2+)-binding residues include H646, C648, and E670. The active-site Proton donor is H699. C731 is a Zn(2+) binding site.

The protein belongs to the vitamin-B12 independent methionine synthase family. The cofactor is Zn(2+).

It catalyses the reaction 5-methyltetrahydropteroyltri-L-glutamate + L-homocysteine = tetrahydropteroyltri-L-glutamate + L-methionine. It functions in the pathway amino-acid biosynthesis; L-methionine biosynthesis via de novo pathway; L-methionine from L-homocysteine (MetE route): step 1/1. Its function is as follows. Catalyzes the transfer of a methyl group from 5-methyltetrahydrofolate to homocysteine resulting in methionine formation. The sequence is that of 5-methyltetrahydropteroyltriglutamate--homocysteine methyltransferase from Ruthia magnifica subsp. Calyptogena magnifica.